A 192-amino-acid chain; its full sequence is Glycerol-3-phosphate acyltransferase (192 aa).

A run of 5 helical transmembrane segments spans residues 4 to 24, 54 to 74, 80 to 100, 112 to 132, and 154 to 174; these read MFWLLATFAYLLGSLSFAILL, LAVLTLLGDLCKGLIPVVLAG, PSQQGWIGVCAVLGHLFPLYF, AGVLLGLYPPAAALAIAAWLL, and LLAWQEPHALLPMSVLTLLIV.

This sequence belongs to the PlsY family. Probably interacts with PlsX.

The protein resides in the cell inner membrane. The catalysed reaction is an acyl phosphate + sn-glycerol 3-phosphate = a 1-acyl-sn-glycero-3-phosphate + phosphate. The protein operates within lipid metabolism; phospholipid metabolism. In terms of biological role, catalyzes the transfer of an acyl group from acyl-phosphate (acyl-PO(4)) to glycerol-3-phosphate (G3P) to form lysophosphatidic acid (LPA). This enzyme utilizes acyl-phosphate as fatty acyl donor, but not acyl-CoA or acyl-ACP. The protein is Glycerol-3-phosphate acyltransferase of Pseudomonas syringae pv. tomato (strain ATCC BAA-871 / DC3000).